Consider the following 147-residue polypeptide: Myoglobin (147 aa).

A Globin domain is found at 2-141 (ADFDAVLKCW…VIADLEANYK (140 aa)). His60 provides a ligand contact to nitrite. An O2-binding site is contributed by His60. His89 is a heme b binding site.

Belongs to the globin family. As to quaternary structure, monomeric.

It is found in the cytoplasm. The protein resides in the sarcoplasm. The enzyme catalyses Fe(III)-heme b-[protein] + nitric oxide + H2O = Fe(II)-heme b-[protein] + nitrite + 2 H(+). The catalysed reaction is H2O2 + AH2 = A + 2 H2O. Functionally, monomeric heme protein which primary function is to store oxygen and facilitate its diffusion within muscle tissues. Reversibly binds oxygen through a pentacoordinated heme iron and enables its timely and efficient release as needed during periods of heightened demand. Depending on the oxidative conditions of tissues and cells, and in addition to its ability to bind oxygen, it also has a nitrite reductase activity whereby it regulates the production of bioactive nitric oxide. Under stress conditions, like hypoxia and anoxia, it also protects cells against reactive oxygen species thanks to its pseudoperoxidase activity. The polypeptide is Myoglobin (mb) (Auxis rochei (Bullet tuna)).